Consider the following 616-residue polypeptide: Dihydroxy-acid dehydratase (616 aa).

A Mg(2+)-binding site is contributed by aspartate 81. Cysteine 122 serves as a coordination point for [2Fe-2S] cluster. Residues aspartate 123 and lysine 124 each contribute to the Mg(2+) site. Position 124 is an N6-carboxylysine (lysine 124). Residue cysteine 195 coordinates [2Fe-2S] cluster. A Mg(2+)-binding site is contributed by glutamate 491. Serine 517 serves as the catalytic Proton acceptor.

The protein belongs to the IlvD/Edd family. In terms of assembly, homodimer. It depends on [2Fe-2S] cluster as a cofactor. Mg(2+) is required as a cofactor.

It catalyses the reaction (2R)-2,3-dihydroxy-3-methylbutanoate = 3-methyl-2-oxobutanoate + H2O. It carries out the reaction (2R,3R)-2,3-dihydroxy-3-methylpentanoate = (S)-3-methyl-2-oxopentanoate + H2O. Its pathway is amino-acid biosynthesis; L-isoleucine biosynthesis; L-isoleucine from 2-oxobutanoate: step 3/4. It functions in the pathway amino-acid biosynthesis; L-valine biosynthesis; L-valine from pyruvate: step 3/4. Functions in the biosynthesis of branched-chain amino acids. Catalyzes the dehydration of (2R,3R)-2,3-dihydroxy-3-methylpentanoate (2,3-dihydroxy-3-methylvalerate) into 2-oxo-3-methylpentanoate (2-oxo-3-methylvalerate) and of (2R)-2,3-dihydroxy-3-methylbutanoate (2,3-dihydroxyisovalerate) into 2-oxo-3-methylbutanoate (2-oxoisovalerate), the penultimate precursor to L-isoleucine and L-valine, respectively. The polypeptide is Dihydroxy-acid dehydratase (Escherichia coli O1:K1 / APEC).